The primary structure comprises 71 residues: uncharacterized protein (71 aa).

Residues 24–44 (FGGGGLSTAIYSIFAFFSIPL) traverse the membrane as a helical segment.

The protein localises to the membrane. This is an uncharacterized protein from Schizosaccharomyces pombe (strain 972 / ATCC 24843) (Fission yeast).